The chain runs to 166 residues: Large ribosomal subunit protein bL9 (166 aa).

It belongs to the bacterial ribosomal protein bL9 family.

In terms of biological role, binds to the 23S rRNA. This is Large ribosomal subunit protein bL9 from Borrelia garinii subsp. bavariensis (strain ATCC BAA-2496 / DSM 23469 / PBi) (Borreliella bavariensis).